We begin with the raw amino-acid sequence, 317 residues long: Spore protein CgeB (317 aa).

May be involved in maturation of the outermost layer of the spore. May act as a glycosyltransferase that contributes to the glycosylation state of the spore. The sequence is that of Spore protein CgeB from Bacillus subtilis (strain 168).